The sequence spans 366 residues: Histidinol-phosphate aminotransferase (366 aa).

Position 228 is an N6-(pyridoxal phosphate)lysine (Lys-228).

Belongs to the class-II pyridoxal-phosphate-dependent aminotransferase family. Histidinol-phosphate aminotransferase subfamily. Homodimer. Requires pyridoxal 5'-phosphate as cofactor.

It catalyses the reaction L-histidinol phosphate + 2-oxoglutarate = 3-(imidazol-4-yl)-2-oxopropyl phosphate + L-glutamate. Its pathway is amino-acid biosynthesis; L-histidine biosynthesis; L-histidine from 5-phospho-alpha-D-ribose 1-diphosphate: step 7/9. The polypeptide is Histidinol-phosphate aminotransferase (Stutzerimonas stutzeri (Pseudomonas stutzeri)).